The following is a 507-amino-acid chain: Sterol 14-alpha demethylase CYP51A (507 aa).

The helical transmembrane segment at 7–29 (YPLWVLVALFAVIIANLLYQQLP) threads the bilayer. Residue Y105 participates in lanosterol binding. C449 is a binding site for heme.

This sequence belongs to the cytochrome P450 family. The cofactor is heme.

Its subcellular location is the endoplasmic reticulum membrane. It catalyses the reaction a 14alpha-methyl steroid + 3 reduced [NADPH--hemoprotein reductase] + 3 O2 = a Delta(14) steroid + formate + 3 oxidized [NADPH--hemoprotein reductase] + 4 H2O + 4 H(+). It carries out the reaction a 14alpha-methyl steroid + reduced [NADPH--hemoprotein reductase] + O2 = a 14alpha-hydroxymethyl steroid + oxidized [NADPH--hemoprotein reductase] + H2O + H(+). The enzyme catalyses a 14alpha-hydroxymethyl steroid + reduced [NADPH--hemoprotein reductase] + O2 = a 14alpha-formyl steroid + oxidized [NADPH--hemoprotein reductase] + 2 H2O + H(+). The catalysed reaction is a 14alpha-formyl steroid + reduced [NADPH--hemoprotein reductase] + O2 = a Delta(14) steroid + formate + oxidized [NADPH--hemoprotein reductase] + H2O + 2 H(+). It catalyses the reaction lanosterol + 3 reduced [NADPH--hemoprotein reductase] + 3 O2 = 4,4-dimethyl-5alpha-cholesta-8,14,24-trien-3beta-ol + formate + 3 oxidized [NADPH--hemoprotein reductase] + 4 H2O + 4 H(+). It carries out the reaction lanosterol + reduced [NADPH--hemoprotein reductase] + O2 = 32-hydroxylanosterol + oxidized [NADPH--hemoprotein reductase] + H2O + H(+). The enzyme catalyses 32-hydroxylanosterol + reduced [NADPH--hemoprotein reductase] + O2 = 32-oxolanosterol + oxidized [NADPH--hemoprotein reductase] + 2 H2O + H(+). The catalysed reaction is 32-oxolanosterol + reduced [NADPH--hemoprotein reductase] + O2 = 4,4-dimethyl-5alpha-cholesta-8,14,24-trien-3beta-ol + formate + oxidized [NADPH--hemoprotein reductase] + H2O + 2 H(+). It catalyses the reaction eburicol + 3 reduced [NADPH--hemoprotein reductase] + 3 O2 = 14-demethyleburicol + formate + 3 oxidized [NADPH--hemoprotein reductase] + 4 H2O + 4 H(+). It carries out the reaction eburicol + reduced [NADPH--hemoprotein reductase] + O2 = 32-hydroxyeburicol + oxidized [NADPH--hemoprotein reductase] + H2O + H(+). The enzyme catalyses 32-hydroxyeburicol + reduced [NADPH--hemoprotein reductase] + O2 = 32-oxoeburicol + oxidized [NADPH--hemoprotein reductase] + 2 H2O + H(+). The catalysed reaction is 32-oxoeburicol + reduced [NADPH--hemoprotein reductase] + O2 = 14-demethyleburicol + formate + oxidized [NADPH--hemoprotein reductase] + H2O + 2 H(+). Its pathway is steroid metabolism; ergosterol biosynthesis. Functionally, together with cyp51B and cyp51C, encodes the sterol 14alpha-demethylase that plays a critical role in the third module of ergosterol biosynthesis pathway, being ergosterol the major sterol component in fungal membranes that participates in a variety of functions. CYP51A encodes the sterol 14-alpha-demethylase induced on ergosterol depletion and is responsible for the intrinsic variation in azole sensitivity. The third module or late pathway involves the ergosterol synthesis itself through consecutive reactions that mainly occur in the endoplasmic reticulum (ER) membrane. In filamentous fungi, during the initial step of this module, lanosterol (lanosta-8,24-dien-3beta-ol) can be metabolized to eburicol. Sterol 14alpha-demethylase catalyzes the three-step oxidative removal of the 14alpha-methyl group (C-32) of both these sterols in the form of formate, and converts eburicol and lanosterol to 14-demethyleburicol (4,4,24-trimethylergosta-8,14,24(28)-trienol) and 4,4-dimethyl-5alpha-cholesta-8,14,24-trien-3beta-ol, respectively, which are further metabolized by other enzymes in the pathway to ergosterol. Can also use substrates not intrinsic to fungi, such as 24,25-dihydrolanosterol (DHL), producing 4,4'-dimethyl-8,14-cholestadien-3-beta-ol, but at lower rates than the endogenous substrates. This is Sterol 14-alpha demethylase CYP51A from Gibberella zeae (strain ATCC MYA-4620 / CBS 123657 / FGSC 9075 / NRRL 31084 / PH-1) (Wheat head blight fungus).